A 224-amino-acid polypeptide reads, in one-letter code: UPF0758 protein lmo1549 (224 aa).

The 123-residue stretch at 102–224 (VVRCPEDAVK…YISLKEKGYF (123 aa)) folds into the MPN domain. Residues His-173, His-175, and Asp-186 each coordinate Zn(2+). Positions 173-186 (HNHPSGDPTPSSED) match the JAMM motif motif.

It belongs to the UPF0758 family.

This is UPF0758 protein lmo1549 from Listeria monocytogenes serovar 1/2a (strain ATCC BAA-679 / EGD-e).